Reading from the N-terminus, the 164-residue chain is uncharacterized protein (164 aa).

This is an uncharacterized protein from Methanocaldococcus jannaschii (strain ATCC 43067 / DSM 2661 / JAL-1 / JCM 10045 / NBRC 100440) (Methanococcus jannaschii).